The following is a 203-amino-acid chain: Anti-sigma-W factor RsiW (203 aa).

The Cytoplasmic segment spans residues 1 to 86; it reads MECPKEIVLL…TARLRRFLHR (86 aa). H30, C34, and C37 together coordinate Zn(2+). A helical membrane pass occupies residues 87–103; that stretch reads HPLLTAASLFLALTLGS. At 104–203 the chain is on the extracellular side; that stretch reads LASSWGERGA…RFNRALQSIE (100 aa).

It belongs to the zinc-associated anti-sigma factor (ZAS) superfamily. Anti-sigma-W factor family. It depends on Zn(2+) as a cofactor. Is processed by three successive proteolytic events. First, the extracellular region of RsiW is cleaved by PrsW (Site-1 cleavage) in response to cell envelope stresses. Next, it undergoes cleavage at an intramembrane site (Site-2 cleavage) mediated by RasP. This cleavage uncovers a cryptic proteolytic tag with conserved alanine residues in the transmembrane segment, that is recognized mainly by the ClpXP protease, which completely degrades the protein in the cytoplasm and leads to the induction of the sigma-W-controlled genes.

Its subcellular location is the membrane. Is the anti-sigma factor for SigW. The presence of RsiW leads to the inactivation of SigW, and its proteolytic destruction to sigma-W activation. The chain is Anti-sigma-W factor RsiW (rsiW) from Geobacillus kaustophilus (strain HTA426).